Reading from the N-terminus, the 347-residue chain is Ribosomal RNA large subunit methyltransferase M (347 aa).

Residues Ser184, 217 to 220 (APGG), Asp236, Asp256, and Asp272 contribute to the S-adenosyl-L-methionine site. Lys301 (proton acceptor) is an active-site residue.

It belongs to the class I-like SAM-binding methyltransferase superfamily. RNA methyltransferase RlmE family. RlmM subfamily. Monomer.

The protein resides in the cytoplasm. The enzyme catalyses cytidine(2498) in 23S rRNA + S-adenosyl-L-methionine = 2'-O-methylcytidine(2498) in 23S rRNA + S-adenosyl-L-homocysteine + H(+). Its function is as follows. Catalyzes the 2'-O-methylation at nucleotide C2498 in 23S rRNA. The protein is Ribosomal RNA large subunit methyltransferase M of Xanthomonas axonopodis pv. citri (strain 306).